Reading from the N-terminus, the 42-residue chain is Photosystem I reaction center subunit IX (42 aa).

Residues 8–28 form a helical membrane-spanning segment; the sequence is YLSTAPVIGVLWMTFTAGFII.

This sequence belongs to the PsaJ family.

Its subcellular location is the plastid. The protein resides in the chloroplast thylakoid membrane. May help in the organization of the PsaE and PsaF subunits. This Pyropia yezoensis (Susabi-nori) protein is Photosystem I reaction center subunit IX.